The chain runs to 364 residues: Phosphoserine aminotransferase (364 aa).

Arg-42 serves as a coordination point for L-glutamate. Residues 76–77 (AS), Trp-100, Thr-150, Asp-169, and Gln-192 each bind pyridoxal 5'-phosphate. The residue at position 193 (Lys-193) is an N6-(pyridoxal phosphate)lysine. 234-235 (NT) serves as a coordination point for pyridoxal 5'-phosphate.

It belongs to the class-V pyridoxal-phosphate-dependent aminotransferase family. SerC subfamily. Homodimer. Requires pyridoxal 5'-phosphate as cofactor.

It is found in the cytoplasm. It catalyses the reaction O-phospho-L-serine + 2-oxoglutarate = 3-phosphooxypyruvate + L-glutamate. The enzyme catalyses 4-(phosphooxy)-L-threonine + 2-oxoglutarate = (R)-3-hydroxy-2-oxo-4-phosphooxybutanoate + L-glutamate. Its pathway is amino-acid biosynthesis; L-serine biosynthesis; L-serine from 3-phospho-D-glycerate: step 2/3. Catalyzes the reversible conversion of 3-phosphohydroxypyruvate to phosphoserine and of 3-hydroxy-2-oxo-4-phosphonooxybutanoate to phosphohydroxythreonine. This Shouchella clausii (strain KSM-K16) (Alkalihalobacillus clausii) protein is Phosphoserine aminotransferase.